Here is a 156-residue protein sequence, read N- to C-terminus: 6,7-dimethyl-8-ribityllumazine synthase (156 aa).

Residues Phe-22, 57-59, and 81-83 contribute to the 5-amino-6-(D-ribitylamino)uracil site; these read AVE and TVI. Position 86-87 (86-87) interacts with (2S)-2-hydroxy-3-oxobutyl phosphate; sequence GT. Catalysis depends on His-89, which acts as the Proton donor. Position 114 (Phe-114) interacts with 5-amino-6-(D-ribitylamino)uracil. Arg-128 provides a ligand contact to (2S)-2-hydroxy-3-oxobutyl phosphate.

The protein belongs to the DMRL synthase family. As to quaternary structure, forms an icosahedral capsid composed of 60 subunits, arranged as a dodecamer of pentamers.

The enzyme catalyses (2S)-2-hydroxy-3-oxobutyl phosphate + 5-amino-6-(D-ribitylamino)uracil = 6,7-dimethyl-8-(1-D-ribityl)lumazine + phosphate + 2 H2O + H(+). It participates in cofactor biosynthesis; riboflavin biosynthesis; riboflavin from 2-hydroxy-3-oxobutyl phosphate and 5-amino-6-(D-ribitylamino)uracil: step 1/2. Functionally, catalyzes the formation of 6,7-dimethyl-8-ribityllumazine by condensation of 5-amino-6-(D-ribitylamino)uracil with 3,4-dihydroxy-2-butanone 4-phosphate. This is the penultimate step in the biosynthesis of riboflavin. The sequence is that of 6,7-dimethyl-8-ribityllumazine synthase from Vibrio campbellii (strain ATCC BAA-1116).